A 62-amino-acid chain; its full sequence is TKSTTTACCDFCPCTRSIPPQCQCTDVREKCHSACKSCLCTRSFPPQCRCYDITDFCYPSCS.

Cystine bridges form between cysteine 8–cysteine 61, cysteine 9–cysteine 24, cysteine 12–cysteine 57, cysteine 14–cysteine 22, cysteine 31–cysteine 38, cysteine 35–cysteine 50, and cysteine 40–cysteine 48.

Forms a monomer at protein concentrations of below 1 mM. At concentrations of above 2 mM, self-associates.

Its function is as follows. Inhibits trypsin but not chymotrypsin. Inhibits the trypsin-like proteinase activity present in larvae of the crop pests Adoxophyes orana, Hyphantria cunea, Lobesia botrana and Ostrinia nubilalis. The polypeptide is Bowman-Birk type proteinase inhibitor (Medicago scutellata (Snail medic)).